We begin with the raw amino-acid sequence, 393 residues long: 8-amino-7-oxononanoate synthase (393 aa).

Position 18 (R18) interacts with substrate. G105–Y106 serves as a coordination point for pyridoxal 5'-phosphate. H130 provides a ligand contact to substrate. Pyridoxal 5'-phosphate contacts are provided by S178, H206, and T234. K237 carries the post-translational modification N6-(pyridoxal phosphate)lysine. T353 contacts substrate.

Belongs to the class-II pyridoxal-phosphate-dependent aminotransferase family. BioF subfamily. In terms of assembly, homodimer. Pyridoxal 5'-phosphate is required as a cofactor.

It catalyses the reaction 6-carboxyhexanoyl-[ACP] + L-alanine + H(+) = (8S)-8-amino-7-oxononanoate + holo-[ACP] + CO2. It participates in cofactor biosynthesis; biotin biosynthesis. Functionally, catalyzes the decarboxylative condensation of pimeloyl-[acyl-carrier protein] and L-alanine to produce 8-amino-7-oxononanoate (AON), [acyl-carrier protein], and carbon dioxide. The sequence is that of 8-amino-7-oxononanoate synthase from Geotalea daltonii (strain DSM 22248 / JCM 15807 / FRC-32) (Geobacter daltonii).